The chain runs to 740 residues: Ribosomal protein S6 kinase alpha-3 (740 aa).

The disordered stretch occupies residues methionine 1–glutamine 26. The Protein kinase 1 domain maps to phenylalanine 68 to phenylalanine 327. ATP-binding positions include leucine 74–valine 82 and lysine 100. The active-site Proton acceptor is the aspartate 193. A Phosphoserine; by PDPK1 modification is found at serine 227. One can recognise an AGC-kinase C-terminal domain in the interval serine 328–glutamine 397. At threonine 365 the chain carries Phosphothreonine. A phosphoserine mark is found at serine 369 and serine 375. A Phosphoserine; by autocatalysis and MAPKAPK2 modification is found at serine 386. The residue at position 415 (serine 415) is a Phosphoserine. In terms of domain architecture, Protein kinase 2 spans tyrosine 422 to isoleucine 679. Residues isoleucine 428 to cysteine 436 and lysine 451 each bind ATP. Tyrosine 529 is subject to Phosphotyrosine; by FGFR3. Aspartate 539 (proton acceptor) is an active-site residue. Phosphoserine occurs at positions 556 and 715.

The protein belongs to the protein kinase superfamily. AGC Ser/Thr protein kinase family. S6 kinase subfamily. In terms of assembly, forms a complex with either MAPK1/ERK2 or MAPK3/ERK1 in quiescent cells. Transiently dissociates following mitogenic stimulation. Interacts with NFATC4, ETV1/ER81 and FGFR1. It depends on Mg(2+) as a cofactor. Activated by phosphorylation at Ser-227 by PDPK1. Autophosphorylated on Ser-386, as part of the activation process. May be phosphorylated at Thr-365 and Ser-369 by MAPK1/ERK2 and MAPK3/ERK1. Can also be activated via phosphorylation at Ser-386 by MAPKAPK2. In terms of processing, N-terminal myristoylation results in an activated kinase in the absence of added growth factors. As to expression, intestine, thymus, lung, heart and brain.

The protein localises to the nucleus. It is found in the cytoplasm. The enzyme catalyses L-seryl-[protein] + ATP = O-phospho-L-seryl-[protein] + ADP + H(+). It carries out the reaction L-threonyl-[protein] + ATP = O-phospho-L-threonyl-[protein] + ADP + H(+). With respect to regulation, upon extracellular signal or mitogen stimulation, phosphorylated at Thr-577 in the C-terminal kinase domain (CTKD) by MAPK1/ERK2 and MAPK3/ERK1. The activated CTKD then autophosphorylates Ser-386, allowing binding of PDPK1, which in turn phosphorylates Ser-227 in the N-terminal kinase domain (NTDK) leading to the full activation of the protein and subsequent phosphorylation of the substrates by the NTKD. Its function is as follows. Serine/threonine-protein kinase that acts downstream of ERK (MAPK1/ERK2 and MAPK3/ERK1) signaling and mediates mitogenic and stress-induced activation of the transcription factors CREB1, ETV1/ER81 and NR4A1/NUR77, regulates translation through RPS6 and EIF4B phosphorylation, and mediates cellular proliferation, survival, and differentiation by modulating mTOR signaling and repressing pro-apoptotic function of BAD and DAPK1. In fibroblast, is required for EGF-stimulated phosphorylation of CREB1 and histone H3 at 'Ser-10', which results in the subsequent transcriptional activation of several immediate-early genes. In response to mitogenic stimulation (EGF and PMA), phosphorylates and activates NR4A1/NUR77 and ETV1/ER81 transcription factors and the cofactor CREBBP. Upon insulin-derived signal, acts indirectly on the transcription regulation of several genes by phosphorylating GSK3B at 'Ser-9' and inhibiting its activity. Phosphorylates RPS6 in response to serum or EGF via an mTOR-independent mechanism and promotes translation initiation by facilitating assembly of the preinitiation complex. In response to insulin, phosphorylates EIF4B, enhancing EIF4B affinity for the EIF3 complex and stimulating cap-dependent translation. Is involved in the mTOR nutrient-sensing pathway by directly phosphorylating TSC2 at 'Ser-1798', which potently inhibits TSC2 ability to suppress mTOR signaling, and mediates phosphorylation of RPTOR, which regulates mTORC1 activity and may promote rapamycin-sensitive signaling independently of the PI3K/AKT pathway. Mediates cell survival by phosphorylating the pro-apoptotic proteins BAD and DAPK1 and suppressing their pro-apoptotic function. Promotes the survival of hepatic stellate cells by phosphorylating CEBPB in response to the hepatotoxin carbon tetrachloride (CCl4). Is involved in cell cycle regulation by phosphorylating the CDK inhibitor CDKN1B, which promotes CDKN1B association with 14-3-3 proteins and prevents its translocation to the nucleus and inhibition of G1 progression. In LPS-stimulated dendritic cells, is involved in TLR4-induced macropinocytosis, and in myeloma cells, acts as effector of FGFR3-mediated transformation signaling, after direct phosphorylation at Tyr-529 by FGFR3. Negatively regulates EGF-induced MAPK1/3 phosphorylation via phosphorylation of SOS1. Phosphorylates SOS1 at 'Ser-1134' and 'Ser-1161' that create YWHAB and YWHAE binding sites and which contribute to the negative regulation of MAPK1/3 phosphorylation. Phosphorylates EPHA2 at 'Ser-897', the RPS6KA-EPHA2 signaling pathway controls cell migration. Acts as a regulator of osteoblast differentiation by mediating phosphorylation of ATF4, thereby promoting ATF4 transactivation activity. The sequence is that of Ribosomal protein S6 kinase alpha-3 (Rps6ka3) from Mus musculus (Mouse).